We begin with the raw amino-acid sequence, 205 residues long: 2-dehydro-3-deoxy-6-phosphogalactonate aldolase (205 aa).

Residue arginine 14 participates in 2-dehydro-3-deoxy-6-phospho-D-galactonate binding. The active-site Proton donor/acceptor is the glutamate 37. 2-dehydro-3-deoxy-6-phospho-D-galactonate is bound by residues threonine 66, lysine 126, glycine 156, glycine 176, and serine 177. The active-site Schiff-base intermediate with substrate is lysine 126.

This sequence belongs to the KHG/KDPG aldolase family. Homotrimer.

It catalyses the reaction 2-dehydro-3-deoxy-6-phospho-D-galactonate = D-glyceraldehyde 3-phosphate + pyruvate. It participates in carbohydrate acid metabolism; D-galactonate degradation; D-glyceraldehyde 3-phosphate and pyruvate from D-galactonate: step 3/3. In terms of biological role, involved in the degradation of galactose via the DeLey-Doudoroff pathway. Catalyzes the reversible, stereospecific retro-aldol cleavage of 2-keto-3-deoxy-6-phosphogalactonate (KDPGal) to pyruvate and D-glyceraldehyde-3-phosphate. In the synthetic direction, it catalyzes the addition of pyruvate to electrophilic aldehydes with re-facial selectivity. It can use a limited number of aldehyde substrates, including D-glyceraldehyde-3-phosphate (natural substrate), D-glyceraldehyde, glycolaldehyde, 2-pyridinecarboxaldehyde, D-ribose, D-erythrose and D-threose. It efficiently catalyzes aldol addition only using pyruvate as the nucleophilic component and accepts both stereochemical configurations at C2 of the electrophile. In Escherichia coli (strain K12), this protein is 2-dehydro-3-deoxy-6-phosphogalactonate aldolase (dgoA).